Reading from the N-terminus, the 347-residue chain is NADH-ubiquinone oxidoreductase chain 2 (347 aa).

11 helical membrane passes run 3-23 (PIILIIILMTVMLGTIIVMIS), 25-45 (HWLLIWIGFEMNMLAIIPIMM), 67-87 (SMLLMMAIIINLMFSGQWTVM), 96-116 (MLMTMALAMKLGMAPFHFWVP), 122-142 (IPLSSGLILLTWQKLAPMSVL), 145-165 (ILPSINLDLILTLSILSITIG), 178-198 (IMAYSSIAHMGWMTAVLLYNP), 200-220 (MTLLNLIIYIIMTSTMFTLFM), 237-257 (APIMTILVLITLLSMGGLPPL), 274-294 (DSIILPTLMAITALLNLYFYM), and 325-345 (LLPTMTVLSTMLLPLTPILSI).

It belongs to the complex I subunit 2 family. As to quaternary structure, core subunit of respiratory chain NADH dehydrogenase (Complex I) which is composed of 45 different subunits. Interacts with TMEM242.

Its subcellular location is the mitochondrion inner membrane. The catalysed reaction is a ubiquinone + NADH + 5 H(+)(in) = a ubiquinol + NAD(+) + 4 H(+)(out). Core subunit of the mitochondrial membrane respiratory chain NADH dehydrogenase (Complex I) which catalyzes electron transfer from NADH through the respiratory chain, using ubiquinone as an electron acceptor. Essential for the catalytic activity and assembly of complex I. The chain is NADH-ubiquinone oxidoreductase chain 2 from Ovis aries (Sheep).